Reading from the N-terminus, the 842-residue chain is Alanine--tRNA ligase (842 aa).

The Zn(2+) site is built by His-549, His-553, Cys-650, and His-654.

The protein belongs to the class-II aminoacyl-tRNA synthetase family. Zn(2+) is required as a cofactor.

It localises to the cytoplasm. It carries out the reaction tRNA(Ala) + L-alanine + ATP = L-alanyl-tRNA(Ala) + AMP + diphosphate. Its function is as follows. Catalyzes the attachment of alanine to tRNA(Ala) in a two-step reaction: alanine is first activated by ATP to form Ala-AMP and then transferred to the acceptor end of tRNA(Ala). Also edits incorrectly charged Ser-tRNA(Ala) and Gly-tRNA(Ala) via its editing domain. This is Alanine--tRNA ligase from Campylobacter jejuni subsp. jejuni serotype O:6 (strain 81116 / NCTC 11828).